A 165-amino-acid polypeptide reads, in one-letter code: Ribosome maturation factor RimM (165 aa).

Positions 94–165 (EDEFYIADLT…YVILNYQREA (72 aa)) constitute a PRC barrel domain.

Belongs to the RimM family. In terms of assembly, binds ribosomal protein uS19.

It localises to the cytoplasm. In terms of biological role, an accessory protein needed during the final step in the assembly of 30S ribosomal subunit, possibly for assembly of the head region. Essential for efficient processing of 16S rRNA. May be needed both before and after RbfA during the maturation of 16S rRNA. It has affinity for free ribosomal 30S subunits but not for 70S ribosomes. The sequence is that of Ribosome maturation factor RimM from Rickettsia rickettsii (strain Iowa).